A 507-amino-acid polypeptide reads, in one-letter code: ATP synthase subunit alpha, chloroplastic (507 aa).

170–177 serves as a coordination point for ATP; that stretch reads GDRQTGKT.

It belongs to the ATPase alpha/beta chains family. As to quaternary structure, F-type ATPases have 2 components, CF(1) - the catalytic core - and CF(0) - the membrane proton channel. CF(1) has five subunits: alpha(3), beta(3), gamma(1), delta(1), epsilon(1). CF(0) has four main subunits: a, b, b' and c.

It localises to the plastid. The protein resides in the chloroplast thylakoid membrane. It carries out the reaction ATP + H2O + 4 H(+)(in) = ADP + phosphate + 5 H(+)(out). Functionally, produces ATP from ADP in the presence of a proton gradient across the membrane. The alpha chain is a regulatory subunit. The polypeptide is ATP synthase subunit alpha, chloroplastic (Nicotiana tomentosiformis (Tobacco)).